Consider the following 466-residue polypeptide: L-seryl-tRNA(Sec) selenium transferase (466 aa).

N6-(pyridoxal phosphate)lysine is present on Lys-292.

Belongs to the SelA family. Pyridoxal 5'-phosphate is required as a cofactor.

Its subcellular location is the cytoplasm. The enzyme catalyses L-seryl-tRNA(Sec) + selenophosphate + H(+) = L-selenocysteinyl-tRNA(Sec) + phosphate. The protein operates within aminoacyl-tRNA biosynthesis; selenocysteinyl-tRNA(Sec) biosynthesis; selenocysteinyl-tRNA(Sec) from L-seryl-tRNA(Sec) (bacterial route): step 1/1. Converts seryl-tRNA(Sec) to selenocysteinyl-tRNA(Sec) required for selenoprotein biosynthesis. The polypeptide is L-seryl-tRNA(Sec) selenium transferase (Rhizobium meliloti (strain 1021) (Ensifer meliloti)).